The following is a 193-amino-acid chain: Protein PrsJ (193 aa).

An N-terminal signal peptide occupies residues 1–27 (MVVNKTTAVLYLIALSLSGFIHTFLRA).

It localises to the periplasm. Its function is as follows. This protein maintains pilus integrity and thus is an important participant in pilus assembly. It may function as molecular chaperone directly or indirectly in the correct assembly of PapA subunits. The polypeptide is Protein PrsJ (prsJ) (Escherichia coli).